The following is a 159-amino-acid chain: Cyclic pyranopterin monophosphate synthase (159 aa).

Residues 75-77 (LCH) and 113-114 (ME) contribute to the substrate site. The active site involves Asp-128.

Belongs to the MoaC family. As to quaternary structure, homohexamer; trimer of dimers.

The enzyme catalyses (8S)-3',8-cyclo-7,8-dihydroguanosine 5'-triphosphate = cyclic pyranopterin phosphate + diphosphate. It participates in cofactor biosynthesis; molybdopterin biosynthesis. Catalyzes the conversion of (8S)-3',8-cyclo-7,8-dihydroguanosine 5'-triphosphate to cyclic pyranopterin monophosphate (cPMP). The polypeptide is Cyclic pyranopterin monophosphate synthase (Burkholderia multivorans (strain ATCC 17616 / 249)).